Here is a 450-residue protein sequence, read N- to C-terminus: tRNA-2-methylthio-N(6)-dimethylallyladenosine synthase (450 aa).

The region spanning 3-118 (KKVFIKTFGC…LPELLQQRER (116 aa)) is the MTTase N-terminal domain. Residues Cys12, Cys49, Cys81, Cys155, Cys159, and Cys162 each coordinate [4Fe-4S] cluster. Positions 141-376 (SVQGASAFVS…VIDTHIRSIS (236 aa)) constitute a Radical SAM core domain. Positions 377–440 (ASRVGTVQRI…AYTLRGQYCA (64 aa)) constitute a TRAM domain.

This sequence belongs to the methylthiotransferase family. MiaB subfamily. As to quaternary structure, monomer. Requires [4Fe-4S] cluster as cofactor.

It localises to the cytoplasm. It catalyses the reaction N(6)-dimethylallyladenosine(37) in tRNA + (sulfur carrier)-SH + AH2 + 2 S-adenosyl-L-methionine = 2-methylsulfanyl-N(6)-dimethylallyladenosine(37) in tRNA + (sulfur carrier)-H + 5'-deoxyadenosine + L-methionine + A + S-adenosyl-L-homocysteine + 2 H(+). Catalyzes the methylthiolation of N6-(dimethylallyl)adenosine (i(6)A), leading to the formation of 2-methylthio-N6-(dimethylallyl)adenosine (ms(2)i(6)A) at position 37 in tRNAs that read codons beginning with uridine. The polypeptide is tRNA-2-methylthio-N(6)-dimethylallyladenosine synthase (Verminephrobacter eiseniae (strain EF01-2)).